The primary structure comprises 365 residues: Class I histocompatibility antigen, Gogo-A*0201 alpha chain (365 aa).

The signal sequence occupies residues 1-24 (MAVMAPRTLLLLLLGALALTQTWA). The tract at residues 25–114 (GSHSMRYFST…LRGYYNQSEA (90 aa)) is alpha-1. The Extracellular portion of the chain corresponds to 25–308 (GSHSMRYFST…EPSSQPTIPI (284 aa)). N110 carries N-linked (GlcNAc...) asparagine glycosylation. The alpha-2 stretch occupies residues 115 to 206 (GSHTIQKMYG…ENGKETLQRT (92 aa)). 2 cysteine pairs are disulfide-bonded: C125–C188 and C227–C283. The tract at residues 207-298 (DAPKTHMTHH…SLPKPLTLRW (92 aa)) is alpha-3. The region spanning 209-295 (PKTHMTHHAV…QHESLPKPLT (87 aa)) is the Ig-like C1-type domain. Residues 299–308 (EPSSQPTIPI) are connecting peptide. Residues 309-332 (VGIIAGLVLFGAVIAGAVIAAVRW) form a helical membrane-spanning segment. The Cytoplasmic segment spans residues 333–365 (RRKSSDRKGGSYSQAASSDSAQGSDVSLTACKV). Residues 338–365 (DRKGGSYSQAASSDSAQGSDVSLTACKV) form a disordered region. Positions 342 to 359 (GSYSQAASSDSAQGSDVS) are enriched in low complexity. Phosphoserine is present on S343. Position 344 is a phosphotyrosine (Y344). Phosphoserine occurs at positions 345, 349, 350, 352, 356, and 359.

It belongs to the MHC class I family. As to quaternary structure, heterodimer of an alpha chain and a beta chain (beta-2-microglobulin).

The protein localises to the membrane. Functionally, involved in the presentation of foreign antigens to the immune system. The protein is Class I histocompatibility antigen, Gogo-A*0201 alpha chain of Gorilla gorilla gorilla (Western lowland gorilla).